A 182-amino-acid polypeptide reads, in one-letter code: Fatty-acid and retinol-binding protein 2 (182 aa).

Positions 1-17 (MIRAFLVVALASVAVFS) are cleaved as a signal peptide. 2 coiled-coil regions span residues 46-73 (LKAITAEEKAALKELAQNHKEYKTEEEF) and 131-152 (TLDSLKELAKGYIAEYKALSDD).

It belongs to the fatty-acid and retinol-binding protein (FARBP) family.

It is found in the secreted. Functionally, probably binds lipids. The protein is Fatty-acid and retinol-binding protein 2 (far-2) of Caenorhabditis elegans.